Consider the following 110-residue polypeptide: Nucleoid-associated protein YpAngola_A2890 (110 aa).

A disordered region spans residues 90–110 (KEKMASVSNGMQLPPGFKMPF).

This sequence belongs to the YbaB/EbfC family. In terms of assembly, homodimer.

It is found in the cytoplasm. It localises to the nucleoid. Its function is as follows. Binds to DNA and alters its conformation. May be involved in regulation of gene expression, nucleoid organization and DNA protection. This is Nucleoid-associated protein YpAngola_A2890 from Yersinia pestis bv. Antiqua (strain Angola).